The sequence spans 88 residues: Sigma-conotoxin GVIIIA (88 aa).

An N-terminal signal peptide occupies residues 1 to 20; it reads MMSKMGAMFVLLLLFTLASS. Residues 21-46 constitute a propeptide that is removed on maturation; sequence LQEGDVQARKTRLKSDFYRALARDDR. The residue at position 55 (proline 55) is a 4-hydroxyproline. 6'-bromotryptophan is present on tryptophan 80. The residue at position 87 (serine 87) is a Serine amide.

It belongs to the conotoxin S superfamily. Contains 5 disulfide bonds. In terms of tissue distribution, expressed by the venom duct.

The protein resides in the secreted. Its function is as follows. Sigma-conotoxins bind and inhibit serotonin-gated ion channels. This peptide selectively and reversibly inhibits 5-hydroxytryptamine 3 receptor (HTR3A) through competitive antagonism (IC(50)=53-86.8 nM). The sequence is that of Sigma-conotoxin GVIIIA from Conus geographus (Geography cone).